Consider the following 198-residue polypeptide: Probable chemoreceptor glutamine deamidase CheD (198 aa).

The protein belongs to the CheD family.

It carries out the reaction L-glutaminyl-[protein] + H2O = L-glutamyl-[protein] + NH4(+). Functionally, probably deamidates glutamine residues to glutamate on methyl-accepting chemotaxis receptors (MCPs), playing an important role in chemotaxis. The chain is Probable chemoreceptor glutamine deamidase CheD from Xanthomonas axonopodis pv. citri (strain 306).